The following is a 341-amino-acid chain: MSEEIHLSVDAMGGDFGPRLCVEAAASFIAKHSNVRITLVGDKAAVSSCIPPQADLSRLHVLHADQVVDMADKPSHALRHKKNSSMWRALQLVADGEAQACVSGGNTGALMAIGCHLLKTIAGIDRPAIAKQIPTARGSSVLLDLGANLECSPQQLFQFGLMGQGLARVYGKSEPTVALLNVGSELTKGNDIIQDTAQLMGDCADMHFRGFVEGDSLYSGEVDVVVCDGFIGNVALKVSEGVAKFVFGDLRSRIGRGVRSRLLAWLAKPVLKPWAEQFRPAKYNGAALLGLKGVVIKSHGGADAEGFEQALYVALEQASAGIPLKIQASLAAMLGAGLETK.

It belongs to the PlsX family. As to quaternary structure, homodimer. Probably interacts with PlsY.

It localises to the cytoplasm. The enzyme catalyses a fatty acyl-[ACP] + phosphate = an acyl phosphate + holo-[ACP]. Its pathway is lipid metabolism; phospholipid metabolism. Its function is as follows. Catalyzes the reversible formation of acyl-phosphate (acyl-PO(4)) from acyl-[acyl-carrier-protein] (acyl-ACP). This enzyme utilizes acyl-ACP as fatty acyl donor, but not acyl-CoA. The chain is Phosphate acyltransferase from Saccharophagus degradans (strain 2-40 / ATCC 43961 / DSM 17024).